The following is a 177-amino-acid chain: Flavodoxin (177 aa).

A Flavodoxin-like domain is found at 4-173 (IGIFFGSDTG…RIDSWLEKLK (170 aa)).

This sequence belongs to the flavodoxin family. It depends on FMN as a cofactor.

Functionally, low-potential electron donor to a number of redox enzymes. NifF is the electron donor to nitrogenase. The chain is Flavodoxin (nifF) from Enterobacter agglomerans (Erwinia herbicola).